Consider the following 328-residue polypeptide: Glutathionyl-hydroquinone reductase YqjG (328 aa).

Cys-63 acts as the Nucleophile in catalysis. Residues Trp-96, 130-133 (RVTV), and 148-149 (ES) each bind glutathione. A GST C-terminal domain is found at 172-296 (PPALQTKIDE…VNFDHIRNHY (125 aa)). Residue Tyr-195 is the Proton donor/acceptor of the active site. Residues 203–311 (QEAYDEAVAK…TINPTGIISI (109 aa)) are dimerization.

The protein belongs to the GST superfamily. Xi-class GSH transferase family. As to quaternary structure, homodimer.

The enzyme catalyses 2-(glutathione-S-yl)-hydroquinone + glutathione = hydroquinone + glutathione disulfide. Functionally, catalyzes glutathione (GSH)-dependent reduction of glutathionyl-hydroquinones (GS-HQs) to the corresponding hydroquinones. Can use a variety of GS-HQs as substrates, such as GS-p-hydroquinone (GS-HQ), GS-hydroxy-p-hydroquinone (GS-HHQ), GS-methyl-p-hydroquinone (GS-MHQ), GS-menadiol, and GS-trichloro-p-hydroquinone (GS-TriCH). Also displays GSH-dependent disulfide-bond reduction activity toward HED (2-hydroxyethyl disulfide), and is able to catalyze DMA (dimethylarsinate) reduction. Exhibits no GSH transferase activity with 1-chloro-2,4-dinitrobenzene (CDNB). This is Glutathionyl-hydroquinone reductase YqjG (yqjG) from Escherichia coli (strain K12).